The chain runs to 259 residues: Snake venom serine proteinase 2 (259 aa).

An N-terminal signal peptide occupies residues 1–18 (MVLIRVLANLLILQLSYA). Residues 19–24 (QKSSEL) constitute a propeptide that is removed on maturation. The Peptidase S1 domain maps to 25–250 (IFGGRPCNRN…HLDWIQSIIA (226 aa)). Cystine bridges form between Cys-31-Cys-162, Cys-49-Cys-65, Cys-97-Cys-257, Cys-141-Cys-211, Cys-173-Cys-190, and Cys-201-Cys-226. Catalysis depends on charge relay system residues His-64 and Asp-109. The active-site Charge relay system is Ser-205.

It belongs to the peptidase S1 family. Snake venom subfamily. Monomer. In terms of tissue distribution, expressed by the venom gland.

The protein localises to the secreted. Its function is as follows. Snake venom serine protease that may act in the hemostasis system of the prey. The chain is Snake venom serine proteinase 2 from Crotalus adamanteus (Eastern diamondback rattlesnake).